A 350-amino-acid polypeptide reads, in one-letter code: Peptide-N(4)-(N-acetyl-beta-glucosaminyl)asparagine amidase (350 aa).

4 residues coordinate Zn(2+): Cys-123, Cys-126, Cys-157, and Cys-160. The active-site Nucleophile is the Cys-183. Active-site residues include His-210 and Asp-227. Glu-230 lines the substrate pocket. Residues 324–350 (EIPPAAGAAGRQSGSADWKRQRGEDGR) form a disordered region. A compositionally biased stretch (basic and acidic residues) spans 340 to 350 (DWKRQRGEDGR).

The protein belongs to the transglutaminase-like superfamily. PNGase family. Zn(2+) serves as cofactor.

It localises to the cytoplasm. The enzyme catalyses Hydrolysis of an N(4)-(acetyl-beta-D-glucosaminyl)asparagine residue in which the glucosamine residue may be further glycosylated, to yield a (substituted) N-acetyl-beta-D-glucosaminylamine and a peptide containing an aspartate residue.. Its function is as follows. Specifically deglycosylates the denatured form of N-linked glycoproteins in the cytoplasm and assists their proteasome-mediated degradation. Cleaves the beta-aspartyl-glucosamine (GlcNAc) of the glycan and the amide side chain of Asn, converting Asn to Asp. Prefers proteins containing high-mannose over those bearing complex type oligosaccharides. Can recognize misfolded proteins in the endoplasmic reticulum that are exported to the cytosol to be destroyed and deglycosylate them, while it has no activity toward native proteins. Deglycosylation is a prerequisite for subsequent proteasome-mediated degradation of some, but not all, misfolded glycoproteins. This chain is Peptide-N(4)-(N-acetyl-beta-glucosaminyl)asparagine amidase (PNG1), found in Eremothecium gossypii (strain ATCC 10895 / CBS 109.51 / FGSC 9923 / NRRL Y-1056) (Yeast).